The chain runs to 652 residues: Acetyl-coenzyme A synthetase (652 aa).

CoA contacts are provided by residues 191–194 (RAGR), T311, and N335. Residues 387 to 389 (GEP), 411 to 416 (DTWWQT), D500, and R515 contribute to the ATP site. Residue S523 coordinates CoA. R526 is a binding site for ATP. V537, H539, and I542 together coordinate Mg(2+). R584 contacts CoA. An N6-acetyllysine; by Pat modification is found at K609.

This sequence belongs to the ATP-dependent AMP-binding enzyme family. As to quaternary structure, monomer. Mg(2+) is required as a cofactor. In terms of processing, acetylated. Deacetylation by the SIR2-homolog deacetylase activates the enzyme.

It catalyses the reaction acetate + ATP + CoA = acetyl-CoA + AMP + diphosphate. Catalyzes the conversion of acetate into acetyl-CoA (AcCoA), an essential intermediate at the junction of anabolic and catabolic pathways. Acs undergoes a two-step reaction. In the first half reaction, Acs combines acetate with ATP to form acetyl-adenylate (AcAMP) intermediate. In the second half reaction, it can then transfer the acetyl group from AcAMP to the sulfhydryl group of CoA, forming the product AcCoA. Required for acetate recapture but not for acetate excretion when this organism is grown on ethanolamine. Its function is as follows. Enables the cell to use acetate during aerobic growth to generate energy via the TCA cycle, and biosynthetic compounds via the glyoxylate shunt. Acetylates CheY, the response regulator involved in flagellar movement and chemotaxis. The protein is Acetyl-coenzyme A synthetase of Salmonella typhimurium (strain LT2 / SGSC1412 / ATCC 700720).